The following is a 324-amino-acid chain: DGAT1/2-independent enzyme synthesizing storage lipids (324 aa).

Residues 1-50 (MIDKNQTCGVGQDSVPYMICLIHILEEWFGVEQLEDYLNFANYLLWVFTP) are Lumenal-facing. An N-linked (GlcNAc...) asparagine glycan is attached at asparagine 5. The chain crosses the membrane as a helical span at residues 51-71 (LILLILPYFTIFLLYLTIIFL). Topologically, residues 72–125 (HIYKRKNVLKEAYSHNLWDGARKTVATLWDGHAAVWHGYEVHGMEKIPEDGPAL) are cytoplasmic. The chain crosses the membrane as a helical span at residues 126-146 (IIFYHGAIPIDFYYFMAKIFI). Residue histidine 130 is part of the active site. The Lumenal portion of the chain corresponds to 147–324 (HKGRTCRVVA…IMSALLERFH (178 aa)).

It belongs to the diacylglycerol acyltransferase family. Highly divergent.

It localises to the endoplasmic reticulum membrane. It carries out the reaction a 1,2-diacylglycerol + a 1,2-diacyl-sn-glycero-3-phosphocholine = a triacylglycerol + a 1-acyl-sn-glycero-3-phosphocholine. The catalysed reaction is a 1-O-alkyl-2-acyl-sn-glycero-3-phosphocholine + a 1,2-diacylglycerol = a 1-O-alkyl-sn-glycero-3-phosphocholine + a triacylglycerol. The enzyme catalyses a 2-acylglycerol + an acyl-CoA = a 1,2-diacylglycerol + CoA. It catalyses the reaction an acyl-CoA + a 1,2-diacyl-sn-glycerol = a triacyl-sn-glycerol + CoA. It carries out the reaction 2-(9Z-octadecenoyl)-glycerol + (9Z)-octadecenoyl-CoA = 1,2-di-(9Z-octadecenoyl)-glycerol + CoA. The catalysed reaction is 1,2-di-(9Z-octadecenoyl)-sn-glycerol + (9Z)-octadecenoyl-CoA = 1,2,3-tri-(9Z-octadecenoyl)-glycerol + CoA. Its activity is regulated as follows. Acyltransferase activity is specifically inhibited by TMX1 at the endoplasmic reticulum, restricting accumulation of triacylglycerol. Functionally, catalytic subunit of the alternative triglyceride biosynthesis pathway, which mediates formation of triacylglycerol from diacylglycerol and membrane phospholipids. Synthesizes triacylglycerol at the expense of membrane phospholipids, such as phosphatidylcholine (PC) and its ether-linked form (ePC), thereby altering the composition of membranes. The alternative triglyceride biosynthesis pathway is probably required to provide the energy required for rapid growth when fuel sources are limiting. It maintains mitochondrial function during periods of extracellular lipid starvation. Can also use acyl-CoA as donor: acts as a acyl-CoA:monoacylglycerol acyltransferase (MGAT), but also shows acyl-CoA:diacylglycerol acyltransferase (DGAT) activity. This Homo sapiens (Human) protein is DGAT1/2-independent enzyme synthesizing storage lipids.